A 351-amino-acid polypeptide reads, in one-letter code: Phospho-N-acetylmuramoyl-pentapeptide-transferase (351 aa).

10 helical membrane passes run 17–37, 61–83, 88–105, 130–150, 158–178, 190–210, 230–250, 254–274, 279–299, and 328–348; these read TAYA…FIIS, MGIP…FFWI, IYFL…CLGF, ILFS…HVSI, SLKL…LISA, GLAI…AYLT, LVIF…FNAY, IMMG…VALI, ILFA…IIQV, and QVVI…LSTI.

It belongs to the glycosyltransferase 4 family. MraY subfamily. Requires Mg(2+) as cofactor.

The protein resides in the cell inner membrane. It catalyses the reaction UDP-N-acetyl-alpha-D-muramoyl-L-alanyl-gamma-D-glutamyl-meso-2,6-diaminopimeloyl-D-alanyl-D-alanine + di-trans,octa-cis-undecaprenyl phosphate = di-trans,octa-cis-undecaprenyl diphospho-N-acetyl-alpha-D-muramoyl-L-alanyl-D-glutamyl-meso-2,6-diaminopimeloyl-D-alanyl-D-alanine + UMP. It functions in the pathway cell wall biogenesis; peptidoglycan biosynthesis. Catalyzes the initial step of the lipid cycle reactions in the biosynthesis of the cell wall peptidoglycan: transfers peptidoglycan precursor phospho-MurNAc-pentapeptide from UDP-MurNAc-pentapeptide onto the lipid carrier undecaprenyl phosphate, yielding undecaprenyl-pyrophosphoryl-MurNAc-pentapeptide, known as lipid I. In Borrelia duttonii (strain Ly), this protein is Phospho-N-acetylmuramoyl-pentapeptide-transferase.